The primary structure comprises 138 residues: Ribosome-binding factor A (138 aa).

Low complexity predominate over residues M1–S20. A disordered region spans residues M1 to Q21.

Belongs to the RbfA family. In terms of assembly, monomer. Binds 30S ribosomal subunits, but not 50S ribosomal subunits or 70S ribosomes.

It is found in the cytoplasm. One of several proteins that assist in the late maturation steps of the functional core of the 30S ribosomal subunit. Associates with free 30S ribosomal subunits (but not with 30S subunits that are part of 70S ribosomes or polysomes). Required for efficient processing of 16S rRNA. May interact with the 5'-terminal helix region of 16S rRNA. This chain is Ribosome-binding factor A, found in Granulibacter bethesdensis (strain ATCC BAA-1260 / CGDNIH1).